A 106-amino-acid chain; its full sequence is Cell division topological specificity factor (106 aa).

Belongs to the MinE family.

Functionally, prevents the cell division inhibition by proteins MinC and MinD at internal division sites while permitting inhibition at polar sites. This ensures cell division at the proper site by restricting the formation of a division septum at the midpoint of the long axis of the cell. The protein is Cell division topological specificity factor of Prochlorococcus marinus subsp. pastoris (strain CCMP1986 / NIES-2087 / MED4).